The chain runs to 308 residues: GTPase Era (308 aa).

Residues 14 to 181 (RCGFVALIGA…KQALAAMVPP (168 aa)) enclose the Era-type G domain. The G1 stretch occupies residues 22–29 (GAPNVGKS). 22-29 (GAPNVGKS) serves as a coordination point for GTP. Residues 48–52 (QTTRA) are G2. Residues 69–72 (DTPG) are G3. Residues 69–73 (DTPGI) and 131–134 (NKVD) each bind GTP. A G4 region spans residues 131–134 (NKVD). The G5 stretch occupies residues 160-162 (ISA). The KH type-2 domain maps to 212–289 (LHQELPYQST…HLFLFVKVRE (78 aa)).

This sequence belongs to the TRAFAC class TrmE-Era-EngA-EngB-Septin-like GTPase superfamily. Era GTPase family. As to quaternary structure, monomer.

Its subcellular location is the cytoplasm. It is found in the cell inner membrane. Its function is as follows. An essential GTPase that binds both GDP and GTP, with rapid nucleotide exchange. Plays a role in 16S rRNA processing and 30S ribosomal subunit biogenesis and possibly also in cell cycle regulation and energy metabolism. The sequence is that of GTPase Era from Bradyrhizobium sp. (strain BTAi1 / ATCC BAA-1182).